The primary structure comprises 71 residues: UPF0352 protein VCM66_1964 (71 aa).

This sequence belongs to the UPF0352 family.

This chain is UPF0352 protein VCM66_1964, found in Vibrio cholerae serotype O1 (strain M66-2).